We begin with the raw amino-acid sequence, 614 residues long: Sodium- and chloride-dependent betaine transporter (614 aa).

At 1–44 (MDGKVAVQECGPPAVSWVPEEGEKLDQEDEDQVKDRGQWTNKME) the chain is on the cytoplasmic side. 3 helical membrane passes run 45-65 (FVLS…FPYL), 73-92 (AFFI…VFFL), and 117-137 (GIGL…IIIL). Topologically, residues 138–210 (AWALFYLFSS…SGIHDLGSLR (73 aa)) are extracellular. A disulfide bond links cysteine 157 and cysteine 166. N-linked (GlcNAc...) asparagine glycosylation is found at asparagine 171 and asparagine 183. The next 9 helical transmembrane spans lie at 211-229 (WELA…FCIW), 238-255 (VVYF…ILLI), 291-308 (IFFS…LGSY), 320-341 (IALC…FSIL), 374-393 (MPLS…FLGL), 423-441 (LLIL…FLVT), 458-478 (GICL…VYGA), 499-518 (ISWL…FSLS), and 538-556 (IGWF…FVVI). Over 557-614 (TLLKTRGPFRKRLRQLITPDSSLPQPKQHPCLDGSAGRNFGPSPTREGLIAGEKETHL) the chain is Cytoplasmic. The segment at 576-614 (DSSLPQPKQHPCLDGSAGRNFGPSPTREGLIAGEKETHL) is disordered.

It belongs to the sodium:neurotransmitter symporter (SNF) (TC 2.A.22) family. SLC6A12 subfamily. As to quaternary structure, interacts with LIN7C. As to expression, expressed in kidney, liver, heart, skeletal muscle, placenta, and a widespread distribution in the brain.

Its subcellular location is the basolateral cell membrane. The protein localises to the cell membrane. The catalysed reaction is 4-aminobutanoate(out) + chloride(out) + 3 Na(+)(out) = 4-aminobutanoate(in) + chloride(in) + 3 Na(+)(in). The enzyme catalyses glycine betaine(out) + 2 chloride(out) + 3 Na(+)(out) = glycine betaine(in) + 2 chloride(in) + 3 Na(+)(in). Transporter that mediates cellular uptake of betaine and GABA in a sodium- and chloride-dependent process. May have a role in regulation of GABAergic transmission in the brain through the reuptake of GABA into presynaptic terminals, as well as in osmotic regulation. Probably also involved in renal and hepatic osmotic regulation. The protein is Sodium- and chloride-dependent betaine transporter of Homo sapiens (Human).